The primary structure comprises 77 residues: Oxyopinin-4a (77 aa).

The first 20 residues, 1 to 20 (MKISQVFIFVFLLMISVAWA), serve as a signal peptide directing secretion. Residues 21 to 47 (NEAYEEESNYLSERFDADVEEITPEFR) constitute a propeptide that is removed on maturation. An intrachain disulfide couples cysteine 51 to cysteine 57.

Expressed by the venom gland.

It localises to the secreted. It is found in the target cell membrane. Functionally, disrupts cell membranes through the formation of pores. Has antibacterial activity against Gram-positive bacteria S.aureus (MIC=10 uM) and B.subtilis (MIC=0.5 uM) as well as Gram-negative bacteria P.fluorescens (MIC=1 uM) and E.coli (MIC=0.5 uM). Has hemolytic activity against human erythrocytes (EC(50)=7 uM). In Oxyopes takobius (Lynx spider), this protein is Oxyopinin-4a.